Here is a 602-residue protein sequence, read N- to C-terminus: Elongation factor 4 (602 aa).

The tr-type G domain maps to 7 to 189; the sequence is KKIRNFSIIA…SIVKNVPSPK (183 aa). GTP contacts are provided by residues 19–24 and 136–139; these read DHGKST and NKID.

Belongs to the TRAFAC class translation factor GTPase superfamily. Classic translation factor GTPase family. LepA subfamily.

The protein resides in the cell membrane. The catalysed reaction is GTP + H2O = GDP + phosphate + H(+). In terms of biological role, required for accurate and efficient protein synthesis under certain stress conditions. May act as a fidelity factor of the translation reaction, by catalyzing a one-codon backward translocation of tRNAs on improperly translocated ribosomes. Back-translocation proceeds from a post-translocation (POST) complex to a pre-translocation (PRE) complex, thus giving elongation factor G a second chance to translocate the tRNAs correctly. Binds to ribosomes in a GTP-dependent manner. In Alkaliphilus oremlandii (strain OhILAs) (Clostridium oremlandii (strain OhILAs)), this protein is Elongation factor 4.